A 126-amino-acid polypeptide reads, in one-letter code: Fluoride-specific ion channel FluC (126 aa).

The next 4 helical transmembrane spans lie at F3 to V23, I37 to V57, V70 to V90, and N104 to M124. G77 and T80 together coordinate Na(+).

The protein belongs to the fluoride channel Fluc/FEX (TC 1.A.43) family.

The protein resides in the cell inner membrane. The enzyme catalyses fluoride(in) = fluoride(out). Its activity is regulated as follows. Na(+) is not transported, but it plays an essential structural role and its presence is essential for fluoride channel function. Its function is as follows. Fluoride-specific ion channel. Important for reducing fluoride concentration in the cell, thus reducing its toxicity. This is Fluoride-specific ion channel FluC from Vibrio cholerae serotype O1 (strain ATCC 39541 / Classical Ogawa 395 / O395).